We begin with the raw amino-acid sequence, 262 residues long: Thiazole synthase (262 aa).

Lys-96 functions as the Schiff-base intermediate with DXP in the catalytic mechanism. Residues Gly-157, 184–185 (AG), and 206–207 (NT) each bind 1-deoxy-D-xylulose 5-phosphate.

Belongs to the ThiG family. As to quaternary structure, homotetramer. Forms heterodimers with either ThiH or ThiS.

Its subcellular location is the cytoplasm. It catalyses the reaction [ThiS sulfur-carrier protein]-C-terminal-Gly-aminoethanethioate + 2-iminoacetate + 1-deoxy-D-xylulose 5-phosphate = [ThiS sulfur-carrier protein]-C-terminal Gly-Gly + 2-[(2R,5Z)-2-carboxy-4-methylthiazol-5(2H)-ylidene]ethyl phosphate + 2 H2O + H(+). Its pathway is cofactor biosynthesis; thiamine diphosphate biosynthesis. Catalyzes the rearrangement of 1-deoxy-D-xylulose 5-phosphate (DXP) to produce the thiazole phosphate moiety of thiamine. Sulfur is provided by the thiocarboxylate moiety of the carrier protein ThiS. In vitro, sulfur can be provided by H(2)S. This chain is Thiazole synthase, found in Legionella pneumophila (strain Lens).